The primary structure comprises 456 residues: Methylenetetrahydrofolate--tRNA-(uracil-5-)-methyltransferase TrmFO (456 aa).

Position 12–17 (12–17) interacts with FAD; it reads GGGLAG.

This sequence belongs to the MnmG family. TrmFO subfamily. FAD is required as a cofactor.

It localises to the cytoplasm. The enzyme catalyses uridine(54) in tRNA + (6R)-5,10-methylene-5,6,7,8-tetrahydrofolate + NADH + H(+) = 5-methyluridine(54) in tRNA + (6S)-5,6,7,8-tetrahydrofolate + NAD(+). It carries out the reaction uridine(54) in tRNA + (6R)-5,10-methylene-5,6,7,8-tetrahydrofolate + NADPH + H(+) = 5-methyluridine(54) in tRNA + (6S)-5,6,7,8-tetrahydrofolate + NADP(+). Catalyzes the folate-dependent formation of 5-methyl-uridine at position 54 (M-5-U54) in all tRNAs. In Picosynechococcus sp. (strain ATCC 27264 / PCC 7002 / PR-6) (Agmenellum quadruplicatum), this protein is Methylenetetrahydrofolate--tRNA-(uracil-5-)-methyltransferase TrmFO.